The primary structure comprises 287 residues: MEFSVAHPAVKAFMCGSLSGTCSTLLFQPLDLVKTRLQTLQSGVQPGTGRVGMVTVFVNVLRTEKLLGLWRGVSPSFVRCIPGVGIYFSTYFTLKQRYFSSGAPGPLQAVLLGAGARCVAGVFMLPVTVIKTRFESGRYRYSGVFGALRSVCQTEGPKALFSGLMATLLRDAPFSGIYVMIYSQTKHLLPPEISQSSYAPVANFSCGVLAGVLASVLTQPADVVKTHIQVSPDVFSRTSDVVRYIYKEHGLVGFFRGAVPRSLRRTMMAAMAWTVYEQLMAQIGLKS.

Solcar repeat units lie at residues 7-97, 104-188, and 198-282; these read HPAV…LKQR, PGPL…TKHL, and YAPV…LMAQ. 6 consecutive transmembrane segments (helical) span residues 13 to 38, 72 to 98, 110 to 135, 163 to 186, 202 to 228, and 257 to 275; these read FMCG…TRLQ, GVSP…KQRY, VLLG…TRFE, GLMA…SQTK, ANFS…KTHI, and GAVP…AWTV.

This sequence belongs to the mitochondrial carrier (TC 2.A.29) family. SLC25A38 subfamily. At 24 hours post-fertilization, expressed predominantly in posterior blood island, posterior cardinal vein and circulating blood, as well as in somites, brain and retina. At 34 hours post-fertilization, becomes restricted to posterior blood island and circulating blood.

It is found in the mitochondrion inner membrane. It carries out the reaction glycine(in) = glycine(out). Functionally, mitochondrial glycine transporter that imports glycine into the mitochondrial matrix. Plays an important role in providing glycine for the first enzymatic step in heme biosynthesis, the condensation of glycine with succinyl-CoA to produce 5-aminolevulinate (ALA) in the mitochondrial matrix. Required during erythropoiesis. In terms of biological role, may play a role as pro-apoptotic protein that induces caspase-dependent apoptosis. The polypeptide is Mitochondrial glycine transporter A (slc25a38a) (Danio rerio (Zebrafish)).